The following is a 2837-amino-acid chain: Probable polyketide synthase 3 (2837 aa).

The Ketosynthase family 3 (KS3) domain maps to 39-464 (NNGIGIIGIG…GSNVCIILKD (426 aa)). Catalysis depends on for beta-ketoacyl synthase activity residues cysteine 209, histidine 348, and histidine 388. The interval 664–697 (GIKPTFIVGHSLGEVTAAYCSGMIDLETECYLIY) is acyl/malonyl transferase. The active-site For acyl/malonyl transferase activity is serine 674. Residues 962-1084 (IDILGNSITD…GNFQLFKHNG (123 aa)) form an N-terminal hotdog fold region. The 294-residue stretch at 962-1255 (IDILGNSITD…CTSLTPIQDS (294 aa)) folds into the PKS/mFAS DH domain. Catalysis depends on histidine 995, which acts as the Proton acceptor; for dehydratase activity. Residues 1106-1255 (NLTKLTKEDL…CTSLTPIQDS (150 aa)) are C-terminal hotdog fold. Aspartate 1169 functions as the Proton donor; for dehydratase activity in the catalytic mechanism. One can recognise a Carrier domain in the interval 2330-2407 (DNKNSVNQMF…SSIKIITNSL (78 aa)). O-(pantetheine 4'-phosphoryl)serine is present on serine 2367. Residues 2464–2484 (KVILLSGSTGFLGGYLLLNLV) traverse the membrane as a helical segment.

The cofactor is pantetheine 4'-phosphate.

The protein resides in the membrane. Its function is as follows. Probable polyketide synthase. The chain is Probable polyketide synthase 3 (pks3) from Dictyostelium discoideum (Social amoeba).